We begin with the raw amino-acid sequence, 121 residues long: Large ribosomal subunit protein uL18 (121 aa).

It belongs to the universal ribosomal protein uL18 family. As to quaternary structure, part of the 50S ribosomal subunit; part of the 5S rRNA/L5/L18/L25 subcomplex. Contacts the 5S and 23S rRNAs.

Functionally, this is one of the proteins that bind and probably mediate the attachment of the 5S RNA into the large ribosomal subunit, where it forms part of the central protuberance. This is Large ribosomal subunit protein uL18 from Burkholderia mallei (strain NCTC 10247).